Consider the following 497-residue polypeptide: 3-octaprenyl-4-hydroxybenzoate carboxy-lyase (497 aa).

Asn175 is a binding site for Mn(2+). Residues 178–180, 192–194, and 197–198 each bind prenylated FMN; these read IYR, RWL, and RG. Residue Glu241 participates in Mn(2+) binding. Catalysis depends on Asp290, which acts as the Proton donor.

Belongs to the UbiD family. Homohexamer. It depends on prenylated FMN as a cofactor. Mn(2+) serves as cofactor.

It localises to the cell membrane. The enzyme catalyses a 4-hydroxy-3-(all-trans-polyprenyl)benzoate + H(+) = a 2-(all-trans-polyprenyl)phenol + CO2. It functions in the pathway cofactor biosynthesis; ubiquinone biosynthesis. Catalyzes the decarboxylation of 3-octaprenyl-4-hydroxy benzoate to 2-octaprenylphenol, an intermediate step in ubiquinone biosynthesis. In Shigella sonnei (strain Ss046), this protein is 3-octaprenyl-4-hydroxybenzoate carboxy-lyase.